The sequence spans 262 residues: Glucosamine-6-phosphate deaminase (262 aa).

The active-site Proton acceptor; for enolization step is the Asp-63. The active-site For ring-opening step is Asn-129. The Proton acceptor; for ring-opening step role is filled by His-131. The For ring-opening step role is filled by Glu-136.

It belongs to the glucosamine/galactosamine-6-phosphate isomerase family. NagB subfamily.

It catalyses the reaction alpha-D-glucosamine 6-phosphate + H2O = beta-D-fructose 6-phosphate + NH4(+). The protein operates within amino-sugar metabolism; N-acetylneuraminate degradation; D-fructose 6-phosphate from N-acetylneuraminate: step 5/5. Functionally, catalyzes the reversible isomerization-deamination of glucosamine 6-phosphate (GlcN6P) to form fructose 6-phosphate (Fru6P) and ammonium ion. In Bacillus cereus (strain ZK / E33L), this protein is Glucosamine-6-phosphate deaminase.